We begin with the raw amino-acid sequence, 207 residues long: MPPKKDAPVKKPAGPSISKPAAKSTPGTPLAKAKAEPAAPQAPAKSQEPPVDLSKVVIEFNKDQLEEFREAFELFDRVGDGKILYSQCGDLMRALGQNPTNAEVLKVLGNPKNEELKSRRVDFETFLPMLQAVAKNRDQGTYEDYLEGLRVFDKEGNGKVMGAELRHVLTTLGEKMTEEEVETVLAGHEDSNGCINYEAFLKHILSL.

Residues 1-50 (MPPKKDAPVKKPAGPSISKPAAKSTPGTPLAKAKAEPAAPQAPAKSQEPP) are disordered. Positions 36–50 (EPAAPQAPAKSQEPP) are enriched in low complexity. 3 EF-hand domains span residues 63 to 98 (DQLE…LGQN), 140 to 175 (GTYE…LGEK), and 175 to 207 (KMTE…ILSL).

Myosin is a hexamer of 2 heavy chains and 4 light chains.

Regulatory light chain of myosin. Does not bind calcium. This chain is Myosin light chain 6B, found in Mus musculus (Mouse).